Consider the following 190-residue polypeptide: Threonylcarbamoyl-AMP synthase (190 aa).

Residues 10-190 (PQDKESVYRH…DWHSRQVIRA (181 aa)) enclose the YrdC-like domain.

The protein belongs to the SUA5 family. TsaC subfamily.

The protein localises to the cytoplasm. It carries out the reaction L-threonine + hydrogencarbonate + ATP = L-threonylcarbamoyladenylate + diphosphate + H2O. Functionally, required for the formation of a threonylcarbamoyl group on adenosine at position 37 (t(6)A37) in tRNAs that read codons beginning with adenine. Catalyzes the conversion of L-threonine, HCO(3)(-)/CO(2) and ATP to give threonylcarbamoyl-AMP (TC-AMP) as the acyladenylate intermediate, with the release of diphosphate. This chain is Threonylcarbamoyl-AMP synthase, found in Dichelobacter nodosus (strain VCS1703A).